Reading from the N-terminus, the 612-residue chain is Protein lin-61 (612 aa).

MBT repeat units lie at residues 143 to 249 (YLWE…MDKI), 263 to 380 (NDMV…GYQL), 381 to 501 (NAKK…LVPP), and 508 to 607 (FRWD…LQPP).

Interacts preferentially with histone H3 that is dimethylated or trimethylated at 'Lys-9'.

It localises to the nucleus. It is found in the chromosome. Functionally, synthetic multivulva class B (synMuvB) protein required to repress the induction of vulval development by Ras signaling. Unlike other synMuv proteins it does not associate with the multiprotein DRM complex and the NuRD-like complex. Interaction with methylated histone H3 is essential for vulva development. It has a role in maintaining genome stability. In Caenorhabditis elegans, this protein is Protein lin-61 (lin-61).